Reading from the N-terminus, the 394-residue chain is Chaperone protein DnaJ (394 aa).

A J domain is found at 4–68 (DYYEILGVSR…ELRARYDRFG (65 aa)). The CR-type zinc-finger motif lies at 136–218 (GGEKQIRISH…CNGEGLAQTT (83 aa)). Residues Cys149, Cys152, Cys166, Cys169, Cys192, Cys195, Cys206, and Cys209 each coordinate Zn(2+). CXXCXGXG motif repeat units follow at residues 149 to 156 (CPVCGGSG), 166 to 173 (CPTCGGAG), 192 to 199 (CPTCGGAG), and 206 to 213 (CYNCNGEG).

The protein belongs to the DnaJ family. Homodimer. Zn(2+) serves as cofactor.

It localises to the cytoplasm. Its function is as follows. Participates actively in the response to hyperosmotic and heat shock by preventing the aggregation of stress-denatured proteins and by disaggregating proteins, also in an autonomous, DnaK-independent fashion. Unfolded proteins bind initially to DnaJ; upon interaction with the DnaJ-bound protein, DnaK hydrolyzes its bound ATP, resulting in the formation of a stable complex. GrpE releases ADP from DnaK; ATP binding to DnaK triggers the release of the substrate protein, thus completing the reaction cycle. Several rounds of ATP-dependent interactions between DnaJ, DnaK and GrpE are required for fully efficient folding. Also involved, together with DnaK and GrpE, in the DNA replication of plasmids through activation of initiation proteins. The sequence is that of Chaperone protein DnaJ from Synechococcus sp. (strain JA-3-3Ab) (Cyanobacteria bacterium Yellowstone A-Prime).